Reading from the N-terminus, the 932-residue chain is Transcriptional regulatory protein DagR (932 aa).

Residues 111–343 (LIGYDRSLRD…LKSDIQFLCA (233 aa)) enclose the Sigma-54 factor interaction domain. ATP is bound by residues 141–148 (GPSGVGKT) and 210–219 (ADGGYLLLDE). The region spanning 462 to 567 (RYGDQIEERV…KECRHYRQRI (106 aa)) is the PRD 1 domain. Position 497 is a phosphohistidine (His497). Residues 572 to 708 (DCGVILIAHG…PQQENGGKVL (137 aa)) form the PTS EIIA type-4 domain. His580 acts as the Tele-phosphohistidine intermediate in catalysis. A PRD 2 domain is found at 835–932 (LNPQRILKEM…YFYIYELLYS (98 aa)). His870 carries the phosphohistidine modification.

Functionally, involved in the regulation of the catabolism of D-glucosaminate. This is Transcriptional regulatory protein DagR (dgaR) from Salmonella typhimurium (strain 14028s / SGSC 2262).